The following is a 122-amino-acid chain: UPF0231 protein VF_2154 (122 aa).

It belongs to the UPF0231 family.

This chain is UPF0231 protein VF_2154, found in Aliivibrio fischeri (strain ATCC 700601 / ES114) (Vibrio fischeri).